We begin with the raw amino-acid sequence, 689 residues long: DNA ligase (689 aa).

Residues 35–39 (DEVYD), 84–85 (SL), and Glu-122 each bind NAD(+). The active-site N6-AMP-lysine intermediate is Lys-124. Positions 145, 182, 308, and 332 each coordinate NAD(+). Positions 426, 429, 444, and 449 each coordinate Zn(2+). The BRCT domain occupies 612-689 (TTEKSLNGKR…NETELIQMCR (78 aa)).

Belongs to the NAD-dependent DNA ligase family. LigA subfamily. The cofactor is Mg(2+). Mn(2+) is required as a cofactor.

The catalysed reaction is NAD(+) + (deoxyribonucleotide)n-3'-hydroxyl + 5'-phospho-(deoxyribonucleotide)m = (deoxyribonucleotide)n+m + AMP + beta-nicotinamide D-nucleotide.. In terms of biological role, DNA ligase that catalyzes the formation of phosphodiester linkages between 5'-phosphoryl and 3'-hydroxyl groups in double-stranded DNA using NAD as a coenzyme and as the energy source for the reaction. It is essential for DNA replication and repair of damaged DNA. This is DNA ligase from Thermosynechococcus vestitus (strain NIES-2133 / IAM M-273 / BP-1).